An 84-amino-acid chain; its full sequence is Hepcidin (84 aa).

The signal sequence occupies residues 1–24 (MALSSQIWAACLLLLLLLASLTSG). A propeptide spanning residues 25-54 (SVFPQQTGQLAELQPQDRAGARAGWTPMLQ) is cleaved from the precursor. Cystine bridges form between C69–C72, C70–C78, and C73–C81.

It belongs to the hepcidin family. As to quaternary structure, interacts with SLC40A1; this interaction promotes SLC40A1 rapid ubiquitination.

The protein resides in the secreted. Liver-produced hormone that constitutes the main circulating regulator of iron absorption and distribution across tissues. Acts by promoting endocytosis and degradation of ferroportin/SLC40A1, leading to the retention of iron in iron-exporting cells and decreased flow of iron into plasma. Controls the major flows of iron into plasma: absorption of dietary iron in the intestine, recycling of iron by macrophages, which phagocytose old erythrocytes and other cells, and mobilization of stored iron from hepatocytes. Its function is as follows. Has strong antimicrobial activity against E.coli ML35P N.cinerea and weaker against S.epidermidis, S.aureus and group b streptococcus bacteria. Active against the fungus C.albicans. No activity against P.aeruginosa. This is Hepcidin (HAMP) from Pongo abelii (Sumatran orangutan).